A 227-amino-acid chain; its full sequence is Monoamine regulon transcriptional regulator (227 aa).

One can recognise an HTH luxR-type domain in the interval 155 to 220 (EDDLPAILTA…ELVSRTWMPA (66 aa)). Residues 179-198 (NKLIARQLDISLSTVKTHLR) constitute a DNA-binding region (H-T-H motif).

Functionally, positive regulatory protein for the induction of arylsulfatase synthesis (maoA), tyramine oxidase (tynA), maoC, maoE/F operon, and atsB/A operon which are all regulated by monoamines, and included under the common term of monoamine regulon. This Klebsiella aerogenes (Enterobacter aerogenes) protein is Monoamine regulon transcriptional regulator (moaR).